The primary structure comprises 28 residues: Glutathione S-transferase 5 (28 aa).

Positions 1 to 28 (PNYKLTYFNLRGRAEISRYLFAYAGIKY) constitute a GST N-terminal domain. Residue Y7 coordinates glutathione.

This sequence belongs to the GST superfamily. Sigma family. Homodimer.

The protein resides in the cytoplasm. It carries out the reaction RX + glutathione = an S-substituted glutathione + a halide anion + H(+). In terms of biological role, conjugation of reduced glutathione to a wide number of exogenous and endogenous hydrophobic electrophiles. In Gallus gallus (Chicken), this protein is Glutathione S-transferase 5.